A 168-amino-acid polypeptide reads, in one-letter code: Putative adenylate kinase (168 aa).

Residues glycine 10, glycine 12, lysine 13, threonine 14, and threonine 15 each contribute to the ATP site. The segment at 28–51 is NMP; the sequence is HLNERIREEGLDAGRDEERDSLVA. The tract at residues 97–107 is LID; it reads DRGEPAAKAAE. Residue arginine 98 participates in ATP binding.

It belongs to the adenylate kinase family. AK6 subfamily. Interacts with uS11. Not a structural component of 40S pre-ribosomes, but transiently interacts with them by binding to uS11.

The enzyme catalyses AMP + ATP = 2 ADP. It carries out the reaction ATP + H2O = ADP + phosphate + H(+). In terms of biological role, broad-specificity nucleoside monophosphate (NMP) kinase that catalyzes the reversible transfer of the terminal phosphate group between nucleoside triphosphates and monophosphates. Also has ATPase activity. Involved in the late maturation steps of the 30S ribosomal particles, specifically 16S rRNA maturation. While NMP activity is not required for ribosome maturation, ATPase activity is. Associates transiently with small ribosomal subunit protein uS11. ATP hydrolysis breaks the interaction with uS11. May temporarily remove uS11 from the ribosome to enable a conformational change of the ribosomal RNA that is needed for the final maturation step of the small ribosomal subunit. This Natronomonas pharaonis (strain ATCC 35678 / DSM 2160 / CIP 103997 / JCM 8858 / NBRC 14720 / NCIMB 2260 / Gabara) (Halobacterium pharaonis) protein is Putative adenylate kinase.